A 365-amino-acid polypeptide reads, in one-letter code: Class I histocompatibility antigen, Gogo-A*0201 alpha chain (365 aa).

An N-terminal signal peptide occupies residues 1–24 (MAVMAPRTLLLLLLGALALTQTWA). The interval 25–114 (GSHSMRYFST…LRGYYNQSEA (90 aa)) is alpha-1. Over 25–308 (GSHSMRYFST…EPSSQPTIPI (284 aa)) the chain is Extracellular. The N-linked (GlcNAc...) asparagine glycan is linked to Asn-110. Residues 115-206 (GSHTIQKMYG…ENGKETLQRT (92 aa)) are alpha-2. Disulfide bonds link Cys-125–Cys-188 and Cys-227–Cys-283. The alpha-3 stretch occupies residues 207 to 298 (DAPKTHMTHH…SLPKPLTLRW (92 aa)). Positions 209 to 295 (PKTHMTHHAV…QHESLPKPLT (87 aa)) constitute an Ig-like C1-type domain. The interval 299–308 (EPSSQPTIPI) is connecting peptide. A helical membrane pass occupies residues 309–332 (VGIIAGLVLFGAVIAGAVIAAVRW). Over 333–365 (RRKSSDRKGGSYSQAASSDSAQGSDVSLTACKV) the chain is Cytoplasmic. Residues 338-365 (DRKGGSYSQAASSDSAQGSDVSLTACKV) form a disordered region. Positions 342–359 (GSYSQAASSDSAQGSDVS) are enriched in low complexity. Ser-343 is subject to Phosphoserine. Tyr-344 is modified (phosphotyrosine). Phosphoserine is present on residues Ser-345, Ser-349, Ser-350, Ser-352, Ser-356, and Ser-359.

This sequence belongs to the MHC class I family. As to quaternary structure, heterodimer of an alpha chain and a beta chain (beta-2-microglobulin).

It is found in the membrane. Functionally, involved in the presentation of foreign antigens to the immune system. This Gorilla gorilla gorilla (Western lowland gorilla) protein is Class I histocompatibility antigen, Gogo-A*0201 alpha chain.